Here is a 909-residue protein sequence, read N- to C-terminus: Translation initiation factor IF-2 (909 aa).

The tract at residues L49 to Q314 is disordered. 3 stretches are compositionally biased toward basic and acidic residues: residues D99–Q177, I186–S236, and R255–R270. Over residues A271–N285 the composition is skewed to basic residues. Basic and acidic residues predominate over residues K286–A299. Residues P408–K577 enclose the tr-type G domain. Positions G417–T424 are G1. G417–T424 contributes to the GTP binding site. Residues G442–H446 form a G2 region. The tract at residues D463–G466 is G3. Residues D463–H467 and N517–D520 contribute to the GTP site. The G4 stretch occupies residues N517–D520. The tract at residues S553–K555 is G5.

Belongs to the TRAFAC class translation factor GTPase superfamily. Classic translation factor GTPase family. IF-2 subfamily.

It localises to the cytoplasm. Functionally, one of the essential components for the initiation of protein synthesis. Protects formylmethionyl-tRNA from spontaneous hydrolysis and promotes its binding to the 30S ribosomal subunits. Also involved in the hydrolysis of GTP during the formation of the 70S ribosomal complex. The protein is Translation initiation factor IF-2 of Photorhabdus laumondii subsp. laumondii (strain DSM 15139 / CIP 105565 / TT01) (Photorhabdus luminescens subsp. laumondii).